Reading from the N-terminus, the 497-residue chain is Acetyltransferase adrJ (497 aa).

Catalysis depends on proton acceptor residues His174 and Asp422. The segment at 430 to 451 (SSAQSSSQNTQKKGKPSYVNGV) is disordered.

It belongs to the plant acyltransferase family. Monomer.

The protein operates within secondary metabolite biosynthesis; terpenoid biosynthesis. Functionally, acetyltransferase; part of the gene cluster that mediates the biosynthesis of andrastins, meroterpenoid compounds that exhibit inhibitory activity against ras farnesyltransferase, suggesting that they could be promising leads for antitumor agents. The first step of the pathway is the synthesis of 3,5-dimethylorsellinic acid (DMOA) by the polyketide synthase adrD via condensation of one acetyl-CoA starter unit with 3 malonyl-CoA units and 2 methylations. DMAO is then converted to farnesyl-DMAO by the prenyltransferase adrG. The methyltransferase adrK catalyzes the methylation of the carboxyl group of farnesyl-DMAO to farnesyl-DMAO methyl ester which is further converted to epoxyfarnesyl-DMAO methyl ester by the FAD-dependent monooxygenase adrH. The terpene cyclase adrI then catalyzes the carbon skeletal rearrangement to generate the andrastin E, the first compound in the pathway having the andrastin scaffold, with the tetracyclic ring system. The post-cyclization tailoring enzymes adrF, adrE, adrJ, and adrA, are involved in the conversion of andrastin E into andrastin A. The short chain dehydrogenase adrF is responsible for the oxidation of the C-3 a hydroxyl group of andrastin E to yield the corresponding ketone, andrastin D. The ketoreductase adrE stereoselectively reduces the carbonyl moiety to reverse the stereochemistry of the C-3 position to yield andrastin F. The acetyltransferase adrJ is the acetyltransferase that attaches the acetyl group to the C-3 hydroxyl group of andrastin F to yield andrastin C. Finally, the cytochrome P450 monooxygenase adrA catalyzes two sequential oxidation reactions of the C-23 methyl group, to generate the corresponding alcohol andrastin B, and aldehyde andrastin A. The protein is Acetyltransferase adrJ of Penicillium rubens (strain ATCC 28089 / DSM 1075 / NRRL 1951 / Wisconsin 54-1255) (Penicillium chrysogenum).